A 341-amino-acid chain; its full sequence is Adenine deaminase (341 aa).

Zn(2+)-binding residues include His24, His26, and His204. Residue Glu207 is the Proton donor of the active site. Asp285 contacts Zn(2+). Asp286 is a substrate binding site.

The protein belongs to the metallo-dependent hydrolases superfamily. Adenosine and AMP deaminases family. Adenine deaminase type 2 subfamily. The cofactor is Zn(2+).

It catalyses the reaction adenine + H2O + H(+) = hypoxanthine + NH4(+). In terms of biological role, catalyzes the hydrolytic deamination of adenine to hypoxanthine. Plays an important role in the purine salvage pathway and in nitrogen catabolism. This chain is Adenine deaminase, found in Sphingopyxis alaskensis (strain DSM 13593 / LMG 18877 / RB2256) (Sphingomonas alaskensis).